A 61-amino-acid polypeptide reads, in one-letter code: MKCLTKYSRVSETSQTCHVWQNLCFKKWQKGKKVSRGCTATCPKPKKDEVIQCCAKDKCNK.

Disulfide bonds link Cys3–Cys24, Cys17–Cys38, Cys42–Cys53, and Cys54–Cys59.

As to expression, expressed by the venom gland.

It is found in the secreted. The protein is Neurotoxin-like protein 1 of Causus rhombeatus (Rhombic night adder).